An 84-amino-acid polypeptide reads, in one-letter code: Molybdopterin synthase sulfur carrier subunit (84 aa).

G84 bears the 1-thioglycine; alternate mark. A Glycyl adenylate; alternate modification is found at G84.

The protein belongs to the MoaD family. MOCS2A subfamily. In terms of assembly, heterotetramer; composed of 2 small (MOCS2A) and 2 large (MOCS2B) subunits. Post-translationally, C-terminal thiocarboxylation occurs in 2 steps, it is first acyl-adenylated (-COAMP) via the hesA/moeB/thiF part of MOCS3, then thiocarboxylated (-COSH) via the rhodanese domain of MOCS3.

It localises to the cytoplasm. The protein operates within cofactor biosynthesis; molybdopterin biosynthesis. Functionally, acts as a sulfur carrier required for molybdopterin biosynthesis. Component of the molybdopterin synthase complex that catalyzes the conversion of precursor Z into molybdopterin by mediating the incorporation of 2 sulfur atoms into precursor Z to generate a dithiolene group. In the complex, serves as sulfur donor by being thiocarboxylated (-COSH) at its C-terminus by MOCS3. After interaction with MOCS2B, the sulfur is then transferred to precursor Z to form molybdopterin. The polypeptide is Molybdopterin synthase sulfur carrier subunit (Caenorhabditis elegans).